Consider the following 337-residue polypeptide: Basic membrane protein A2 (337 aa).

The N-terminal stretch at 1–17 (MNKLLLLILFECIIFLS) is a signal peptide. Residue Cys18 is the site of N-palmitoyl cysteine attachment. A lipid anchor (S-diacylglycerol cysteine) is attached at Cys18.

The protein belongs to the BMP lipoprotein family. As to quaternary structure, monomer.

It is found in the cell inner membrane. Functionally, immunogenic protein. May be part of an ABC-type nucleoside uptake system involved in the purine salvage pathway. The sequence is that of Basic membrane protein A2 (bmpA2) from Borrelia garinii subsp. bavariensis (strain ATCC BAA-2496 / DSM 23469 / PBi) (Borreliella bavariensis).